The sequence spans 666 residues: UvrABC system protein B (666 aa).

In terms of domain architecture, Helicase ATP-binding spans 25–412 (NGIKNNNKWQ…SENIAEQVIR (388 aa)). 38 to 45 (GVTGSGKT) is an ATP binding site. The Beta-hairpin signature appears at 91-114 (YYDYYQPEAYVAQTDTYIEKDASI). In terms of domain architecture, Helicase C-terminal spans 429-595 (QIDDLYSEIK…TIKKAVRDVI (167 aa)). The 36-residue stretch at 622–657 (DKLIKEFEKEMKEAAKELQFEKAAYFRDKVNELKKK) folds into the UVR domain.

Belongs to the UvrB family. Forms a heterotetramer with UvrA during the search for lesions. Interacts with UvrC in an incision complex.

The protein localises to the cytoplasm. Functionally, the UvrABC repair system catalyzes the recognition and processing of DNA lesions. A damage recognition complex composed of 2 UvrA and 2 UvrB subunits scans DNA for abnormalities. Upon binding of the UvrA(2)B(2) complex to a putative damaged site, the DNA wraps around one UvrB monomer. DNA wrap is dependent on ATP binding by UvrB and probably causes local melting of the DNA helix, facilitating insertion of UvrB beta-hairpin between the DNA strands. Then UvrB probes one DNA strand for the presence of a lesion. If a lesion is found the UvrA subunits dissociate and the UvrB-DNA preincision complex is formed. This complex is subsequently bound by UvrC and the second UvrB is released. If no lesion is found, the DNA wraps around the other UvrB subunit that will check the other stand for damage. In Clostridium acetobutylicum (strain ATCC 824 / DSM 792 / JCM 1419 / IAM 19013 / LMG 5710 / NBRC 13948 / NRRL B-527 / VKM B-1787 / 2291 / W), this protein is UvrABC system protein B.